A 325-amino-acid polypeptide reads, in one-letter code: Tagatose 1,6-diphosphate aldolase (325 aa).

This sequence belongs to the aldolase LacD family.

It carries out the reaction D-tagatofuranose 1,6-bisphosphate = D-glyceraldehyde 3-phosphate + dihydroxyacetone phosphate. Its pathway is carbohydrate metabolism; D-tagatose 6-phosphate degradation; D-glyceraldehyde 3-phosphate and glycerone phosphate from D-tagatose 6-phosphate: step 2/2. This chain is Tagatose 1,6-diphosphate aldolase, found in Staphylococcus haemolyticus (strain JCSC1435).